The sequence spans 181 residues: Large ribosomal subunit protein uL5 (181 aa).

The protein belongs to the universal ribosomal protein uL5 family. As to quaternary structure, part of the 50S ribosomal subunit; part of the 5S rRNA/L5/L18/L25 subcomplex. Contacts the 5S rRNA and the P site tRNA. Forms a bridge to the 30S subunit in the 70S ribosome.

In terms of biological role, this is one of the proteins that bind and probably mediate the attachment of the 5S RNA into the large ribosomal subunit, where it forms part of the central protuberance. In the 70S ribosome it contacts protein S13 of the 30S subunit (bridge B1b), connecting the 2 subunits; this bridge is implicated in subunit movement. Contacts the P site tRNA; the 5S rRNA and some of its associated proteins might help stabilize positioning of ribosome-bound tRNAs. In Helicobacter pylori (strain P12), this protein is Large ribosomal subunit protein uL5.